Consider the following 405-residue polypeptide: 4-hydroxy-3-methylbut-2-en-1-yl diphosphate synthase (flavodoxin) (405 aa).

4 residues coordinate [4Fe-4S] cluster: C297, C300, C343, and E350.

This sequence belongs to the IspG family. [4Fe-4S] cluster serves as cofactor.

The catalysed reaction is (2E)-4-hydroxy-3-methylbut-2-enyl diphosphate + oxidized [flavodoxin] + H2O + 2 H(+) = 2-C-methyl-D-erythritol 2,4-cyclic diphosphate + reduced [flavodoxin]. It functions in the pathway isoprenoid biosynthesis; isopentenyl diphosphate biosynthesis via DXP pathway; isopentenyl diphosphate from 1-deoxy-D-xylulose 5-phosphate: step 5/6. Functionally, converts 2C-methyl-D-erythritol 2,4-cyclodiphosphate (ME-2,4cPP) into 1-hydroxy-2-methyl-2-(E)-butenyl 4-diphosphate. The sequence is that of 4-hydroxy-3-methylbut-2-en-1-yl diphosphate synthase (flavodoxin) from Francisella tularensis subsp. tularensis (strain FSC 198).